A 371-amino-acid polypeptide reads, in one-letter code: Alanine dehydrogenase (371 aa).

Arg-15 and Lys-74 together coordinate substrate. Residue His-95 is the Proton donor/acceptor of the active site. Residues Ser-133, 177–178 (QA), Asp-197, Ser-219, 238–239 (VL), 266–269 (IAID), Arg-279, and 298–301 (VANM) contribute to the NAD(+) site. Asp-269 functions as the Proton donor/acceptor in the catalytic mechanism.

Belongs to the AlaDH/PNT family. As to quaternary structure, homohexamer. Trimer of dimer.

It catalyses the reaction L-alanine + NAD(+) + H2O = pyruvate + NH4(+) + NADH + H(+). Its pathway is amino-acid degradation; L-alanine degradation via dehydrogenase pathway; NH(3) and pyruvate from L-alanine: step 1/1. In terms of biological role, catalyzes the reversible reductive amination of pyruvate to L-alanine. May play a role in cell wall synthesis as L-alanine is an important constituent of the peptidoglycan layer. This Staphylococcus saprophyticus subsp. saprophyticus (strain ATCC 15305 / DSM 20229 / NCIMB 8711 / NCTC 7292 / S-41) protein is Alanine dehydrogenase (ald).